A 1351-amino-acid chain; its full sequence is D-lysergyl-peptide-synthetase subunit 2 (1351 aa).

The adenylation (A) domain stretch occupies residues 285-684 (RCLSQPTASA…GRKDTQVKLR (400 aa)). Residues 828-904 (APQTTTEKLL…ALACVVRSGK (77 aa)) enclose the Carrier domain. S865 carries the O-(pantetheine 4'-phosphoryl)serine modification. A condensation (C) domain region spans residues 941–1340 (EDVYPCTPLQ…LIRDILAVPQ (400 aa)).

The protein belongs to the NRP synthetase family.

It functions in the pathway alkaloid biosynthesis; ergot alkaloid biosynthesis. In terms of biological role, D-lysergyl-peptide-synthetase subunit 2; part of the gene cluster that mediates the biosynthesis of fungal ergot alkaloid ergovaline, the predominant ergopeptine product in E.festucae var. lolii. DmaW catalyzes the first step of ergot alkaloid biosynthesis by condensing dimethylallyl diphosphate (DMAP) and tryptophan to form 4-dimethylallyl-L-tryptophan. The second step is catalyzed by the methyltransferase easF that methylates 4-dimethylallyl-L-tryptophan in the presence of S-adenosyl-L-methionine, resulting in the formation of 4-dimethylallyl-L-abrine. The catalase easC and the FAD-dependent oxidoreductase easE then transform 4-dimethylallyl-L-abrine to chanoclavine-I which is further oxidized by easD in the presence of NAD(+), resulting in the formation of chanoclavine-I aldehyde. Agroclavine dehydrogenase easG then mediates the conversion of chanoclavine-I aldehyde to agroclavine via a non-enzymatic adduct reaction: the substrate is an iminium intermediate that is formed spontaneously from chanoclavine-I aldehyde in the presence of glutathione. The presence of easA is not required to complete this reaction. Further conversion of agroclavine to paspalic acid is a two-step process involving oxidation of agroclavine to elymoclavine and of elymoclavine to paspalic acid, the second step being performed by the elymoclavine oxidase cloA. Paspalic acid is then further converted to D-lysergic acid. Ergovaline is assembled from D-lysergic acid and three different amino acids by the D-lysergyl-peptide-synthetase composed of a monomudular (lpsB) and a trimodular (lpsA) nonribosomal peptide synthetase subunit. The polypeptide is D-lysergyl-peptide-synthetase subunit 2 (Epichloe festucae var. lolii (Neotyphodium lolii)).